The primary structure comprises 94 residues: Co-chaperonin GroES (94 aa).

It belongs to the GroES chaperonin family. In terms of assembly, heptamer of 7 subunits arranged in a ring. Interacts with the chaperonin GroEL.

It is found in the cytoplasm. Together with the chaperonin GroEL, plays an essential role in assisting protein folding. The GroEL-GroES system forms a nano-cage that allows encapsulation of the non-native substrate proteins and provides a physical environment optimized to promote and accelerate protein folding. GroES binds to the apical surface of the GroEL ring, thereby capping the opening of the GroEL channel. The protein is Co-chaperonin GroES of Brevibacillus choshinensis.